The sequence spans 369 residues: MTIDWDSILSYNTIKVVRIRDRRLGILHLCFLIVIVLYVVVYSAIIKKGYVTTEEPVGSIRTSLLAPDELKSNQAYCKNNTEPYPYEKLDCVYYDEKLALFPIGDDVGFTASTRMRISDQTVNCSLMNPSCKFYTNTSMNVYLADIESFTVLIDHTMYAPSSQIQFNGDDLSGYVLDQNGNEIQLNESVNTIGVQGKPDILQLGKLLEFAGVDLDGPSLVNSSNSIRYDGCVLFVFIEYSNTFSYDLKKIKYVYSIKKVDDTAYDVPEVIILNNENSRLYYKRHAIRLIFIQTGVIGSFNFQSLLLTLVSGLGLLTVSTLIVDQLAIRFLPQRKSYSSLKFQTTESFRMKKKIVNDDGEDKLYHNIEAL.

Residues 1–25 (MTIDWDSILSYNTIKVVRIRDRRLG) lie on the Cytoplasmic side of the membrane. A helical membrane pass occupies residues 26–46 (ILHLCFLIVIVLYVVVYSAII). Topologically, residues 47 to 369 (KKGYVTTEEP…DKLYHNIEAL (323 aa)) are lumenal. Residues 283 to 296 (RHAIRLIFIQTGVI) form a pore-forming motif region.

Belongs to the P2X receptor family.

The protein resides in the contractile vacuole membrane. Functionally, P2X receptors are ATP-gated ion channels that play a role in intracellular calcium signaling. Not required for the purinergic response to extracellular nucleotides. Not essential for osmoregulation. Inward currents are evoked by intracellular ATP and ATP analogs. Insensitive to the P2 receptor antagonists PPADS and suramin, and also copper ions. Inhibited by sodium ions. Permeable to chloride ions. This chain is P2X receptor B (p2xB), found in Dictyostelium discoideum (Social amoeba).